The chain runs to 595 residues: Methionine--tRNA ligase (595 aa).

Positions 11 to 21 match the 'HIGH' region motif; sequence PYANGPRHIGH. Zn(2+) is bound by residues Cys143, Cys146, Cys156, and Cys159. Residues 350 to 354 carry the 'KMSKS' region motif; that stretch reads KFSSS. Ser353 contributes to the ATP binding site.

This sequence belongs to the class-I aminoacyl-tRNA synthetase family. MetG type 1 subfamily. As to quaternary structure, monomer. Requires Zn(2+) as cofactor.

It localises to the cytoplasm. The catalysed reaction is tRNA(Met) + L-methionine + ATP = L-methionyl-tRNA(Met) + AMP + diphosphate. Functionally, is required not only for elongation of protein synthesis but also for the initiation of all mRNA translation through initiator tRNA(fMet) aminoacylation. This Nocardioides sp. (strain ATCC BAA-499 / JS614) protein is Methionine--tRNA ligase.